The primary structure comprises 123 residues: MKFSLKDLFGLVVSFGLIFLALTIGSGIQHWTGTSVPGSVIGMLVLFVSMAIGLVKVEWVKPGASLLIRYMILLFVPISVGLMEHFDMLIANALPIIASAIGGSLIVLVSLGWLLQRILGKEA.

4 consecutive transmembrane segments (helical) span residues 8–28 (LFGL…GSGI), 35–55 (SVPG…IGLV), 71–91 (MILL…MLIA), and 94–114 (LPII…LGWL).

This sequence belongs to the UPF0299 family.

The protein resides in the cell inner membrane. The polypeptide is UPF0299 membrane protein VV1471 (Vibrio vulnificus (strain YJ016)).